The chain runs to 260 residues: Resolvase (260 aa).

The 204-residue stretch at 38–241 folds into the Tyr recombinase domain; that stretch reads ELPKYLLAPE…FALDVAARHR (204 aa). Catalysis depends on residues arginine 73, lysine 105, histidine 193, arginine 196, and histidine 219. Catalysis depends on tyrosine 228, which acts as the O-(3'-phospho-DNA)-tyrosine intermediate.

It belongs to the 'phage' integrase family.

This resolvase acts at the RfsF equivalent resolution sequence of pColBM-CL139. This is Resolvase (resD) from Escherichia coli.